We begin with the raw amino-acid sequence, 431 residues long: MKILDWSQLDVAARTDALTRPVQTVAAQTRNAVAALIADVRTRGDAALREITARFDGVSLERFAVSEAEFAAAEAAVAPELRQAMQDAVARIDTFHRAGMSEGYAVETAPGVVCEKIVRPIGRVGLYVPAGSAPLPSTALMLGVPARLAGCRAVVLCTPPRKDGSVDPAVLVAAWLTGVRRVFKLGGAQAIAAMAYGTESVPSCDKLFGPGNSYVTEAKQQVAQSGAAAIDMPAGPSEVLVIADAGAQAAFVAADLLSQAEHGADSQVLLLSDSDVLIDAVQAQLEIQLAHLSRADIARQALAQSRLIKVQTLDEAFAISNRYAPEHLILALREPRAWLAQVEAAGSVFLGDYTPEALGDYCSGTNHVLPTSGAARAYSGVSVASFQNMFSVQAASKAGIAGIGECALILARAEGLDAHANAVALRMGVAA.

3 residues coordinate NAD(+): tyrosine 127, glutamine 189, and asparagine 212. Residues serine 237, glutamine 259, and histidine 262 each contribute to the substrate site. Zn(2+) is bound by residues glutamine 259 and histidine 262. Active-site proton acceptor residues include glutamate 326 and histidine 327. The substrate site is built by histidine 327, aspartate 360, glutamate 414, and histidine 419. Zn(2+) is bound at residue aspartate 360. A Zn(2+)-binding site is contributed by histidine 419.

The protein belongs to the histidinol dehydrogenase family. Zn(2+) serves as cofactor.

The catalysed reaction is L-histidinol + 2 NAD(+) + H2O = L-histidine + 2 NADH + 3 H(+). It participates in amino-acid biosynthesis; L-histidine biosynthesis; L-histidine from 5-phospho-alpha-D-ribose 1-diphosphate: step 9/9. Its function is as follows. Catalyzes the sequential NAD-dependent oxidations of L-histidinol to L-histidinaldehyde and then to L-histidine. The sequence is that of Histidinol dehydrogenase from Xanthomonas oryzae pv. oryzae (strain KACC10331 / KXO85).